We begin with the raw amino-acid sequence, 328 residues long: Alanine racemase (328 aa).

K33 functions as the Proton acceptor; specific for D-alanine in the catalytic mechanism. An N6-(pyridoxal phosphate)lysine modification is found at K33. R118 is a binding site for substrate. The active-site Proton acceptor; specific for L-alanine is Y237. M283 serves as a coordination point for substrate.

This sequence belongs to the alanine racemase family. It depends on pyridoxal 5'-phosphate as a cofactor.

The enzyme catalyses L-alanine = D-alanine. The protein operates within amino-acid biosynthesis; D-alanine biosynthesis; D-alanine from L-alanine: step 1/1. In terms of biological role, catalyzes the interconversion of L-alanine and D-alanine. May also act on other amino acids. The polypeptide is Alanine racemase (alr) (Campylobacter jejuni subsp. jejuni serotype O:6 (strain 81116 / NCTC 11828)).